Reading from the N-terminus, the 261-residue chain is 1-(5-phosphoribosyl)-5-[(5-phosphoribosylamino)methylideneamino] imidazole-4-carboxamide isomerase (261 aa).

Asp7 functions as the Proton acceptor in the catalytic mechanism. Asp129 acts as the Proton donor in catalysis.

This sequence belongs to the HisA/HisF family.

Its subcellular location is the cytoplasm. The enzyme catalyses 1-(5-phospho-beta-D-ribosyl)-5-[(5-phospho-beta-D-ribosylamino)methylideneamino]imidazole-4-carboxamide = 5-[(5-phospho-1-deoxy-D-ribulos-1-ylimino)methylamino]-1-(5-phospho-beta-D-ribosyl)imidazole-4-carboxamide. Its pathway is amino-acid biosynthesis; L-histidine biosynthesis; L-histidine from 5-phospho-alpha-D-ribose 1-diphosphate: step 4/9. The sequence is that of 1-(5-phosphoribosyl)-5-[(5-phosphoribosylamino)methylideneamino] imidazole-4-carboxamide isomerase from Colwellia psychrerythraea (strain 34H / ATCC BAA-681) (Vibrio psychroerythus).